The primary structure comprises 1216 residues: Probable cation-transporting ATPase 13A5 (1216 aa).

5 helical membrane-spanning segments follow: residues 33–53 (RALC…MFYW), 198–218 (LLVK…LTLW), 222–242 (GYIE…VLSV), 401–421 (FMVF…GVYM), and 433–453 (MALI…LTIG). D486 serves as the catalytic 4-aspartylphosphate intermediate. 2 N-linked (GlcNAc...) asparagine glycosylation sites follow: N650 and N817. Residues D848 and D852 each contribute to the Mg(2+) site. 6 consecutive transmembrane segments (helical) span residues 896–916 (ALVS…IQFI), 933–950 (YLLQ…TMSI), 971–991 (LLLS…CTFL), 1040–1060 (FEGT…AFIF), 1075–1095 (LFSL…FCDF), and 1113–1133 (VSIL…EDAV).

It belongs to the cation transport ATPase (P-type) (TC 3.A.3) family. Type V subfamily. As to expression, specifically expressed in brain and stomach.

It is found in the membrane. It carries out the reaction ATP + H2O = ADP + phosphate + H(+). In Mus musculus (Mouse), this protein is Probable cation-transporting ATPase 13A5 (Atp13a5).